We begin with the raw amino-acid sequence, 120 residues long: MALNIEEIIASVKEASVLELNDLVKAIEEEFGVTAAAPVAVAAAGGAAAEQTEFTVELASAGDSKIKVIKVVREITGLGLKEAKELVDNAPKALKEGVAKEEAEEIKAKLEEVGANVEVK.

Belongs to the bacterial ribosomal protein bL12 family. As to quaternary structure, homodimer. Part of the ribosomal stalk of the 50S ribosomal subunit. Forms a multimeric L10(L12)X complex, where L10 forms an elongated spine to which 2 to 4 L12 dimers bind in a sequential fashion. Binds GTP-bound translation factors.

Its function is as follows. Forms part of the ribosomal stalk which helps the ribosome interact with GTP-bound translation factors. Is thus essential for accurate translation. This chain is Large ribosomal subunit protein bL12, found in Listeria monocytogenes serotype 4b (strain CLIP80459).